A 927-amino-acid chain; its full sequence is DNA-binding protein RFX6 (927 aa).

2 disordered regions span residues 1-21 (MAKV…PQLP) and 81-108 (NFSS…QKKS). Residues 123–198 (TLQWLEDNYI…YHYYGIGIKE (76 aa)) constitute a DNA-binding region (RFX-type winged-helix).

This sequence belongs to the RFX family. In terms of assembly, interacts with RFX3. In terms of tissue distribution, in the adult pancreas, expression is restricted to the islets where it could be detected in all endocrine lineages.

The protein resides in the nucleus. Its function is as follows. Transcription factor required to direct islet cell differentiation during endocrine pancreas development. Specifically required for the differentiation of 4 of the 5 islet cell types and for the production of insulin. Not required for pancreatic PP (polypeptide-producing) cells differentiation. Acts downstream of NEUROG3 and regulates the transcription factors involved in beta-cell maturation and function, thereby restricting the expression of the beta-cell differentiation and specification genes, and thus the beta-cell fate choice. Activates transcription by forming a heterodimer with RFX3 and binding to the X-box in the promoter of target genes. Involved in glucose-stimulated insulin secretion by promoting insulin and L-type calcium channel gene transcription. The protein is DNA-binding protein RFX6 (Rfx6) of Mus musculus (Mouse).